The following is a 463-amino-acid chain: Cysteine--tRNA ligase (463 aa).

Cys-33 serves as a coordination point for Zn(2+). The short motif at 35 to 45 (PTVYDFAHIGN) is the 'HIGH' region element. The Zn(2+) site is built by Cys-221, His-246, and Glu-250. The short motif at 279-283 (KMSKS) is the 'KMSKS' region element. Lys-282 serves as a coordination point for ATP.

Belongs to the class-I aminoacyl-tRNA synthetase family. In terms of assembly, monomer. Zn(2+) serves as cofactor.

It localises to the cytoplasm. It catalyses the reaction tRNA(Cys) + L-cysteine + ATP = L-cysteinyl-tRNA(Cys) + AMP + diphosphate. This chain is Cysteine--tRNA ligase, found in Rhizobium rhizogenes (strain K84 / ATCC BAA-868) (Agrobacterium radiobacter).